A 186-amino-acid chain; its full sequence is MREAIKRYGSFELLKGKNTLPELEALLEERKLVLENLKKQLKEAHKGKPKIEAEGDEKLKELIREVNKAQAEVRALEIIVNRVRKYEELYAQYKQMTEKKAYVDPKLWVRIRKMNETGERKVVRTYSRATTIIPEFVGHTIAVHNGKTFVPVYITQDMVGHKLGEFAPTRTFKGHPEKTAKVVKKK.

Positions 1–95 (MREAIKRYGS…YEELYAQYKQ (95 aa)) are unknown. The segment at 96–186 (MTEKKAYVDP…EKTAKVVKKK (91 aa)) is small ribosomal subunit protein uS19.

The protein belongs to the universal ribosomal protein uS19 family.

Functionally, protein S19 forms a complex with S13 that binds strongly to the 16S ribosomal RNA. This chain is Small ribosomal subunit protein uS19, found in Aquifex aeolicus (strain VF5).